A 338-amino-acid chain; its full sequence is 5-dehydro-2-deoxygluconokinase (338 aa).

This sequence belongs to the carbohydrate kinase PfkB family.

It catalyses the reaction 5-dehydro-2-deoxy-D-gluconate + ATP = 6-phospho-5-dehydro-2-deoxy-D-gluconate + ADP + H(+). The protein operates within polyol metabolism; myo-inositol degradation into acetyl-CoA; acetyl-CoA from myo-inositol: step 5/7. Functionally, catalyzes the phosphorylation of 5-dehydro-2-deoxy-D-gluconate (2-deoxy-5-keto-D-gluconate or DKG) to 6-phospho-5-dehydro-2-deoxy-D-gluconate (DKGP). The protein is 5-dehydro-2-deoxygluconokinase of Mesomycoplasma hyopneumoniae (strain J / ATCC 25934 / NCTC 10110) (Mycoplasma hyopneumoniae).